The chain runs to 103 residues: UPF0132 membrane protein AF_0105 (103 aa).

Helical transmembrane passes span 5 to 25 (VAGALSYLLGPITGILFLLME), 35 to 55 (AMQSTITFAGFWVLDIALSFI), and 58 to 78 (IGVLLIPIVGLVAFITWLVCI).

The protein belongs to the UPF0132 family.

The protein resides in the cell membrane. The polypeptide is UPF0132 membrane protein AF_0105 (Archaeoglobus fulgidus (strain ATCC 49558 / DSM 4304 / JCM 9628 / NBRC 100126 / VC-16)).